We begin with the raw amino-acid sequence, 369 residues long: tRNA 2-selenouridine synthase (369 aa).

In terms of domain architecture, Rhodanese spans 15-138 (FIAGQPLIDL…MRQYLIGVIE (124 aa)). The active-site S-selanylcysteine intermediate is Cys-98.

It belongs to the SelU family. As to quaternary structure, monomer.

It catalyses the reaction 5-methylaminomethyl-2-thiouridine(34) in tRNA + selenophosphate + (2E)-geranyl diphosphate + H2O + H(+) = 5-methylaminomethyl-2-selenouridine(34) in tRNA + (2E)-thiogeraniol + phosphate + diphosphate. The enzyme catalyses 5-methylaminomethyl-2-thiouridine(34) in tRNA + (2E)-geranyl diphosphate = 5-methylaminomethyl-S-(2E)-geranyl-thiouridine(34) in tRNA + diphosphate. It carries out the reaction 5-methylaminomethyl-S-(2E)-geranyl-thiouridine(34) in tRNA + selenophosphate + H(+) = 5-methylaminomethyl-2-(Se-phospho)selenouridine(34) in tRNA + (2E)-thiogeraniol. The catalysed reaction is 5-methylaminomethyl-2-(Se-phospho)selenouridine(34) in tRNA + H2O = 5-methylaminomethyl-2-selenouridine(34) in tRNA + phosphate. Involved in the post-transcriptional modification of the uridine at the wobble position (U34) of tRNA(Lys), tRNA(Glu) and tRNA(Gln). Catalyzes the conversion of 2-thiouridine (S2U-RNA) to 2-selenouridine (Se2U-RNA). Acts in a two-step process involving geranylation of 2-thiouridine (S2U) to S-geranyl-2-thiouridine (geS2U) and subsequent selenation of the latter derivative to 2-selenouridine (Se2U) in the tRNA chain. The polypeptide is tRNA 2-selenouridine synthase (Shewanella sp. (strain MR-7)).